The sequence spans 204 residues: Pyridoxal 5'-phosphate synthase subunit PdxT (204 aa).

An L-glutamine-binding site is contributed by glycine 52–serine 54. The Nucleophile role is filled by cysteine 84. L-glutamine is bound by residues arginine 116 and isoleucine 143–arginine 144. Catalysis depends on charge relay system residues histidine 184 and glutamate 186.

The protein belongs to the glutaminase PdxT/SNO family. In terms of assembly, in the presence of PdxS, forms a dodecamer of heterodimers. Only shows activity in the heterodimer.

It catalyses the reaction aldehydo-D-ribose 5-phosphate + D-glyceraldehyde 3-phosphate + L-glutamine = pyridoxal 5'-phosphate + L-glutamate + phosphate + 3 H2O + H(+). It carries out the reaction L-glutamine + H2O = L-glutamate + NH4(+). Its pathway is cofactor biosynthesis; pyridoxal 5'-phosphate biosynthesis. Its function is as follows. Catalyzes the hydrolysis of glutamine to glutamate and ammonia as part of the biosynthesis of pyridoxal 5'-phosphate. The resulting ammonia molecule is channeled to the active site of PdxS. The polypeptide is Pyridoxal 5'-phosphate synthase subunit PdxT (Pyrobaculum arsenaticum (strain DSM 13514 / JCM 11321 / PZ6)).